Reading from the N-terminus, the 565-residue chain is Adenine deaminase 1 (565 aa).

It belongs to the metallo-dependent hydrolases superfamily. Adenine deaminase family. Requires Mn(2+) as cofactor.

The enzyme catalyses adenine + H2O + H(+) = hypoxanthine + NH4(+). The polypeptide is Adenine deaminase 1 (Rhizobium meliloti (strain 1021) (Ensifer meliloti)).